The following is a 278-amino-acid chain: Glucosamine-6-phosphate deaminase (278 aa).

The Proton acceptor; for enolization step role is filled by aspartate 72. The For ring-opening step role is filled by aspartate 141. Histidine 143 serves as the catalytic Proton acceptor; for ring-opening step. Glutamate 148 functions as the For ring-opening step in the catalytic mechanism.

This sequence belongs to the glucosamine/galactosamine-6-phosphate isomerase family. As to quaternary structure, homohexamer.

It is found in the cytoplasm. The catalysed reaction is alpha-D-glucosamine 6-phosphate + H2O = beta-D-fructose 6-phosphate + NH4(+). The protein operates within nucleotide-sugar biosynthesis; UDP-N-acetyl-alpha-D-glucosamine biosynthesis; alpha-D-glucosamine 6-phosphate from D-fructose 6-phosphate: step 1/1. In terms of biological role, catalyzes the reversible conversion of alpha-D-glucosamine 6-phosphate (GlcN-6P) into beta-D-fructose 6-phosphate (Fru-6P) and ammonium ion, a regulatory reaction step in de novo uridine diphosphate-N-acetyl-alpha-D-glucosamine (UDP-GlcNAc) biosynthesis via hexosamine pathway. In Aedes aegypti (Yellowfever mosquito), this protein is Glucosamine-6-phosphate deaminase (Gnpda1).